The chain runs to 243 residues: 1-(5-phosphoribosyl)-5-[(5-phosphoribosylamino)methylideneamino] imidazole-4-carboxamide isomerase (243 aa).

Residue Asp-8 is the Proton acceptor of the active site. Asp-129 serves as the catalytic Proton donor.

It belongs to the HisA/HisF family.

The protein resides in the cytoplasm. The enzyme catalyses 1-(5-phospho-beta-D-ribosyl)-5-[(5-phospho-beta-D-ribosylamino)methylideneamino]imidazole-4-carboxamide = 5-[(5-phospho-1-deoxy-D-ribulos-1-ylimino)methylamino]-1-(5-phospho-beta-D-ribosyl)imidazole-4-carboxamide. It functions in the pathway amino-acid biosynthesis; L-histidine biosynthesis; L-histidine from 5-phospho-alpha-D-ribose 1-diphosphate: step 4/9. The protein is 1-(5-phosphoribosyl)-5-[(5-phosphoribosylamino)methylideneamino] imidazole-4-carboxamide isomerase of Nitratidesulfovibrio vulgaris (strain DSM 19637 / Miyazaki F) (Desulfovibrio vulgaris).